The following is a 74-amino-acid chain: Anaphase-promoting complex subunit 13 (74 aa).

The tract at residues 33–53 is disordered; that stretch reads LNELPDPEQDNGGTTESVKEQ.

Belongs to the APC13 family. As to quaternary structure, the mammalian APC/C is composed at least of 14 distinct subunits ANAPC1, ANAPC2, CDC27/APC3, ANAPC4, ANAPC5, CDC16/APC6, ANAPC7, CDC23/APC8, ANAPC10, ANAPC11, CDC26/APC12, ANAPC13, ANAPC15 and ANAPC16 that assemble into a complex of at least 19 chains with a combined molecular mass of around 1.2 MDa; APC/C interacts with FZR1 and FBXO5.

It localises to the nucleus. It participates in protein modification; protein ubiquitination. Component of the anaphase promoting complex/cyclosome (APC/C), a cell cycle-regulated E3 ubiquitin ligase that controls progression through mitosis and the G1 phase of the cell cycle. The APC/C complex acts by mediating ubiquitination and subsequent degradation of target proteins: it mainly mediates the formation of 'Lys-11'-linked polyubiquitin chains and, to a lower extent, the formation of 'Lys-48'- and 'Lys-63'-linked polyubiquitin chains. The APC/C complex catalyzes assembly of branched 'Lys-11'-/'Lys-48'-linked branched ubiquitin chains on target proteins. The protein is Anaphase-promoting complex subunit 13 (ANAPC13) of Pongo abelii (Sumatran orangutan).